The following is a 502-amino-acid chain: Maturase K (502 aa).

It belongs to the intron maturase 2 family. MatK subfamily.

Its subcellular location is the plastid. It is found in the chloroplast. Its function is as follows. Usually encoded in the trnK tRNA gene intron. Probably assists in splicing its own and other chloroplast group II introns. This Vaccinium vitis-idaea (Mountain cranberry) protein is Maturase K.